Consider the following 61-residue polypeptide: Double gene block protein 2 (61 aa).

The Cytoplasmic portion of the chain corresponds to 1-12 (MACCRCDSSPGD). A helical; Signal-anchor for type II membrane protein transmembrane segment spans residues 13-33 (YSGALLILFISFVFFYITSLS). Over 34–61 (PQGNTYVHHFDSSSVKTQYVGISTNGDG) the chain is Lumenal.

Belongs to the gammacarmovirus double gene block protein 2 family.

The protein resides in the host endoplasmic reticulum membrane. In terms of biological role, cell-to-cell movement function. The chain is Double gene block protein 2 from Melon necrotic spot virus (MNSV).